Consider the following 43-residue polypeptide: Metallothionein-3 (43 aa).

The protein belongs to the metallothionein superfamily. Type 5 family.

Functionally, this protein binds cations of several transition elements. Thought to be involved in metal ion homeostasis. The protein is Metallothionein-3 (MtnC) of Drosophila melanogaster (Fruit fly).